The following is an 89-amino-acid chain: Small ribosomal subunit protein uS15 (89 aa).

The disordered stretch occupies residues M1–A25. Over residues K8–A25 the composition is skewed to polar residues.

Belongs to the universal ribosomal protein uS15 family. In terms of assembly, part of the 30S ribosomal subunit. Forms a bridge to the 50S subunit in the 70S ribosome, contacting the 23S rRNA.

One of the primary rRNA binding proteins, it binds directly to 16S rRNA where it helps nucleate assembly of the platform of the 30S subunit by binding and bridging several RNA helices of the 16S rRNA. In terms of biological role, forms an intersubunit bridge (bridge B4) with the 23S rRNA of the 50S subunit in the ribosome. The chain is Small ribosomal subunit protein uS15 from Parasynechococcus marenigrum (strain WH8102).